The primary structure comprises 382 residues: Transcription termination/antitermination protein NusA (382 aa).

Residues 135–199 (EDIMTGIVQR…KGPQIMISRT (65 aa)) form the S1 motif domain. The KH domain maps to 301-367 (EKTTQVIVPD…TLALDQETAD (67 aa)). Positions 348–382 (LLEDEAASHETLALDQETADQPEATVETSKNHEEE) are disordered.

The protein belongs to the NusA family. Monomer. Binds directly to the core enzyme of the DNA-dependent RNA polymerase and to nascent RNA.

It is found in the cytoplasm. Functionally, participates in both transcription termination and antitermination. The sequence is that of Transcription termination/antitermination protein NusA from Halalkalibacterium halodurans (strain ATCC BAA-125 / DSM 18197 / FERM 7344 / JCM 9153 / C-125) (Bacillus halodurans).